The following is a 541-amino-acid chain: Glutamyl-tRNA(Gln) amidotransferase subunit A, chloroplastic/mitochondrial (541 aa).

Active-site charge relay system residues include Lys-121 and Ser-196. The Acyl-ester intermediate role is filled by Ser-220.

The protein belongs to the amidase family. GatA subfamily. As to quaternary structure, subunit of the heterotrimeric GatCAB amidotransferase (AdT) complex, composed of A, B and C subunits.

The protein resides in the mitochondrion. It localises to the plastid. It is found in the chloroplast stroma. It catalyses the reaction L-glutamyl-tRNA(Gln) + L-glutamine + ATP + H2O = L-glutaminyl-tRNA(Gln) + L-glutamate + ADP + phosphate + H(+). In terms of biological role, allows the formation of correctly charged Gln-tRNA(Gln) through the transamidation of misacylated Glu-tRNA(Gln) in chloroplasts and mitochondria. The reaction takes place in the presence of glutamine and ATP through an activated gamma-phospho-Glu-tRNA(Gln). This is Glutamyl-tRNA(Gln) amidotransferase subunit A, chloroplastic/mitochondrial from Sorghum bicolor (Sorghum).